The following is a 546-amino-acid chain: MTMFASLTSKMLSVSTSDHASVVSLNLFVALLCACIVIGHLLEENRWMNESITALLIGLGTGVVILLISRGKNSHLLVFSEDLFFIYLLPPIIFNAGFQVKKKQFFRNFVTIMAFGAIGTVVSCTIISLGAIQFFKKLDIGTFDLGDFLAIGAIFAATDSVCTLQVLNQDETPLLYSLVFGEGVVNDATSVVLFNAIQSFDLTHLNHEAAFQFLGNFFYLFLLSTGLGVATGLISAYVIKKLYFGRHSTDREVALMMLMAYLSYMLAELFALSGILTVFFCGIVMSHYTWHNVTESSRITTKHAFATLSFLAETFIFLYVGMDALDIEKWRFVSDSPGTSVAVSSILMGLVMLGRAAFVFPLSFLSNLAKKHQSEKISIKQQVVIWWAGLMRGAVSMALAYNKFTRSGHTELRGNAIMITSTITVCLFSTMVFGMLTKPLIRYLMPHQKATTSTTSMLSDDSTPKSIHIPLLDGEQLDSFELPGSHQDVPRPNSLRGFLMRPTRTVHYYWRQFDDAFMRPVFGGRGFVPFVPGSPTERSSHDLSKP.

Over 1–21 the chain is Cytoplasmic; the sequence is MTMFASLTSKMLSVSTSDHAS. The chain crosses the membrane as a helical span at residues 22–42; sequence VVSLNLFVALLCACIVIGHLL. At 43–47 the chain is on the vacuolar side; it reads EENRW. A helical transmembrane segment spans residues 48–68; that stretch reads MNESITALLIGLGTGVVILLI. The Cytoplasmic portion of the chain corresponds to 69–75; sequence SRGKNSH. Positions 76-96 form an intramembrane region, helical; the sequence is LLVFSEDLFFIYLLPPIIFNA. Over 97–111 the chain is Cytoplasmic; the sequence is GFQVKKKQFFRNFVT. The chain crosses the membrane as a helical span at residues 112-132; that stretch reads IMAFGAIGTVVSCTIISLGAI. Residues 133–148 are Vacuolar-facing; that stretch reads QFFKKLDIGTFDLGDF. Intramembrane regions (helical) lie at residues 149–168 and 174–194; these read LAIGAIFAATDSVCTLQVLN and LLYSLVFGEGVVNDATSVVLF. The Vacuolar portion of the chain corresponds to 195-218; the sequence is NAIQSFDLTHLNHEAAFQFLGNFF. A helical transmembrane segment spans residues 219-239; that stretch reads YLFLLSTGLGVATGLISAYVI. The Cytoplasmic segment spans residues 240–264; the sequence is KKLYFGRHSTDREVALMMLMAYLSY. A helical transmembrane segment spans residues 265-285; sequence MLAELFALSGILTVFFCGIVM. The Vacuolar segment spans residues 286–304; that stretch reads SHYTWHNVTESSRITTKHA. Residue Asn292 is glycosylated (N-linked (GlcNAc...) asparagine). The chain crosses the membrane as a helical span at residues 305–325; sequence FATLSFLAETFIFLYVGMDAL. The Cytoplasmic segment spans residues 326–344; sequence DIEKWRFVSDSPGTSVAVS. Residues 345–365 traverse the membrane as a helical segment; sequence SILMGLVMLGRAAFVFPLSFL. At 366–381 the chain is on the vacuolar side; it reads SNLAKKHQSEKISIKQ. A helical membrane pass occupies residues 382–402; sequence QVVIWWAGLMRGAVSMALAYN. Topologically, residues 403–415 are cytoplasmic; sequence KFTRSGHTELRGN. Residues 416–436 traverse the membrane as a helical segment; the sequence is AIMITSTITVCLFSTMVFGML. Residues 437-546 are Vacuolar-facing; sequence TKPLIRYLMP…ERSSHDLSKP (110 aa).

This sequence belongs to the monovalent cation:proton antiporter 1 (CPA1) transporter (TC 2.A.36) family. As to expression, expressed in roots and shoots.

It localises to the vacuole membrane. It carries out the reaction Na(+)(in) + H(+)(out) = Na(+)(out) + H(+)(in). It catalyses the reaction K(+)(in) + H(+)(out) = K(+)(out) + H(+)(in). Functionally, acts in low affinity electroneutral exchange of protons for cations such as Na(+) or K(+) across membranes. May also exchange Li(+) and Cs(+) with a lower affinity. Involved in vacuolar ion compartmentalization necessary for cell volume regulation and cytoplasmic Na(+) detoxification. This Arabidopsis thaliana (Mouse-ear cress) protein is Sodium/hydrogen exchanger 2 (NHX2).